The chain runs to 500 residues: L-aspartate semialdehyde sulfurtransferase (500 aa).

C131 serves as the catalytic Cysteine persulfide intermediate. CBS domains lie at 384 to 441 and 446 to 500; these read MADF…IFDS and MTKK…ARRY.

This sequence belongs to the L-aspartate semialdehyde sulfurtransferase family. Forms homodimers. May form a complex with MA_1822.

It carries out the reaction L-aspartate 4-semialdehyde + reduced 2[4Fe-4S]-[ferredoxin] + hydrogen sulfide + 3 H(+) = oxidized 2[4Fe-4S]-[ferredoxin] + L-homocysteine + H2O. It functions in the pathway amino-acid biosynthesis. Required for O-acetylhomoserine sulfhydrylase (OAHS)-independent homocysteine (Hcy) biosynthesis. Together with MA_1822, catalyzes the condensation of sulfide with aspartate semialdehyde to generate homocysteine. Likely functions through persulfide intermediate. This chain is L-aspartate semialdehyde sulfurtransferase, found in Methanosarcina acetivorans (strain ATCC 35395 / DSM 2834 / JCM 12185 / C2A).